The sequence spans 102 residues: Small ribosomal subunit protein uS10 (102 aa).

It belongs to the universal ribosomal protein uS10 family. In terms of assembly, part of the 30S ribosomal subunit.

Involved in the binding of tRNA to the ribosomes. This Lactococcus lactis subsp. lactis (strain IL1403) (Streptococcus lactis) protein is Small ribosomal subunit protein uS10.